Reading from the N-terminus, the 362-residue chain is 3-dehydroquinate synthase (362 aa).

NAD(+) contacts are provided by residues 71-76 (DGEQYK), 105-109 (GVIGD), 129-130 (TT), lysine 142, lysine 151, and 169-172 (CLKT). Zn(2+)-binding residues include glutamate 184, histidine 247, and histidine 264.

It belongs to the sugar phosphate cyclases superfamily. Dehydroquinate synthase family. Requires Co(2+) as cofactor. It depends on Zn(2+) as a cofactor. The cofactor is NAD(+).

It is found in the cytoplasm. The catalysed reaction is 7-phospho-2-dehydro-3-deoxy-D-arabino-heptonate = 3-dehydroquinate + phosphate. It functions in the pathway metabolic intermediate biosynthesis; chorismate biosynthesis; chorismate from D-erythrose 4-phosphate and phosphoenolpyruvate: step 2/7. In terms of biological role, catalyzes the conversion of 3-deoxy-D-arabino-heptulosonate 7-phosphate (DAHP) to dehydroquinate (DHQ). The protein is 3-dehydroquinate synthase of Salmonella schwarzengrund (strain CVM19633).